The following is a 160-amino-acid chain: CXXC motif containing zinc binding protein (160 aa).

The Zn(2+) site is built by Cys33, Cys36, Cys67, and Cys70. Ser75 carries the post-translational modification Phosphoserine.

Belongs to the UPF0587 family. Monomer.

The polypeptide is CXXC motif containing zinc binding protein (Czib) (Mus musculus (Mouse)).